A 228-amino-acid polypeptide reads, in one-letter code: uncharacterized protein (228 aa).

The region spanning 11-78 (PPVNQQIYRI…PQRGSYVNKI (68 aa)) is the HTH gntR-type domain. The segment at residues 38-57 (EKEVSVRFNVSRQPVREAFI) is a DNA-binding region (H-T-H motif).

This is an uncharacterized protein from Escherichia coli O6:H1 (strain CFT073 / ATCC 700928 / UPEC).